Here is a 259-residue protein sequence, read N- to C-terminus: Thiazole synthase (259 aa).

Residue lysine 98 is the Schiff-base intermediate with DXP of the active site. 1-deoxy-D-xylulose 5-phosphate-binding positions include glycine 159, 185–186 (AG), and 207–208 (NS).

The protein belongs to the ThiG family. Homotetramer. Forms heterodimers with either ThiH or ThiS.

The protein resides in the cytoplasm. The catalysed reaction is [ThiS sulfur-carrier protein]-C-terminal-Gly-aminoethanethioate + 2-iminoacetate + 1-deoxy-D-xylulose 5-phosphate = [ThiS sulfur-carrier protein]-C-terminal Gly-Gly + 2-[(2R,5Z)-2-carboxy-4-methylthiazol-5(2H)-ylidene]ethyl phosphate + 2 H2O + H(+). It functions in the pathway cofactor biosynthesis; thiamine diphosphate biosynthesis. In terms of biological role, catalyzes the rearrangement of 1-deoxy-D-xylulose 5-phosphate (DXP) to produce the thiazole phosphate moiety of thiamine. Sulfur is provided by the thiocarboxylate moiety of the carrier protein ThiS. In vitro, sulfur can be provided by H(2)S. This Chlorobium phaeobacteroides (strain BS1) protein is Thiazole synthase.